Reading from the N-terminus, the 199-residue chain is Ribonuclease HII (199 aa).

The RNase H type-2 domain maps to 7-196; sequence PWVCGVDEAG…VRELMANEKD (190 aa). Residues D13, E14, and D105 each coordinate a divalent metal cation.

Belongs to the RNase HII family. The cofactor is Mn(2+). Mg(2+) is required as a cofactor.

The protein resides in the cytoplasm. The enzyme catalyses Endonucleolytic cleavage to 5'-phosphomonoester.. Its function is as follows. Endonuclease that specifically degrades the RNA of RNA-DNA hybrids. The chain is Ribonuclease HII from Nitrosospira multiformis (strain ATCC 25196 / NCIMB 11849 / C 71).